The chain runs to 500 residues: Cytochrome P450 71B9 (500 aa).

A helical membrane pass occupies residues 1–21 (MATIWFLSLLFLCCILLAAFK). Heme is bound at residue C440.

Belongs to the cytochrome P450 family. It depends on heme as a cofactor.

It localises to the membrane. The sequence is that of Cytochrome P450 71B9 (CYP71B9) from Arabidopsis thaliana (Mouse-ear cress).